The primary structure comprises 316 residues: Daunorubicin resistance ATP-binding protein DrrA3 (316 aa).

The ABC transporter domain occupies 6 to 236; it reads ITVDGAEKRY…TGGDRIDVVL (231 aa). 38–45 is a binding site for ATP; sequence GPNGAGKT.

It belongs to the ABC transporter superfamily. Drug exporter-1 (DrugE1) (TC 3.A.1.105) family. The complex is probably composed of two ATP-binding proteins (DrrA3) and two transmembrane proteins (DrrB3).

The protein resides in the cell membrane. The enzyme catalyses daunorubicin(in) + ATP + H2O = daunorubicin(out) + ADP + phosphate + H(+). In terms of biological role, part of the ABC transporter complex DrrA3B3 involved in daunorubicin efflux. Responsible for energy coupling to the transport system. Confers self-resistance to daunorubicin, an antibiotic produced by S.coeruleorubidus. The efficiency of DrrA3B3 to export daunorubicin is probably lower than that of DrrA1B1 or DrrA2B2. The polypeptide is Daunorubicin resistance ATP-binding protein DrrA3 (Streptomyces coeruleorubidus).